A 191-amino-acid chain; its full sequence is Molybdenum cofactor guanylyltransferase (191 aa).

GTP is bound by residues Leu11 to Gly13, Lys23, Asp66, and Asp97. Asp97 is a Mg(2+) binding site.

It belongs to the MobA family. In terms of assembly, monomer. Requires Mg(2+) as cofactor.

The protein localises to the cytoplasm. The enzyme catalyses Mo-molybdopterin + GTP + H(+) = Mo-molybdopterin guanine dinucleotide + diphosphate. Functionally, transfers a GMP moiety from GTP to Mo-molybdopterin (Mo-MPT) cofactor (Moco or molybdenum cofactor) to form Mo-molybdopterin guanine dinucleotide (Mo-MGD) cofactor. The sequence is that of Molybdenum cofactor guanylyltransferase from Campylobacter jejuni subsp. jejuni serotype O:2 (strain ATCC 700819 / NCTC 11168).